The chain runs to 2183 residues: Coagulation factor V (2183 aa).

Positions 1–19 (MLLVCPCFFLLVVLGTRWA) are cleaved as a signal peptide. 4 consecutive Plastocyanin-like domains span residues 30–192 (QLRQ…LLIC), 202–328 (TQKM…IKNC), 347–524 (KRWE…LLIC), and 534–682 (VQRV…DVKC). 2 consecutive F5/8 type A domains span residues 30–328 (QLRQ…IKNC) and 347–682 (KRWE…DVKC). Residues D138 and D139 each coordinate Ca(2+). N-linked (GlcNAc...) asparagine glycans are attached at residues N176, N238, and N381. At T638 the chain carries Phosphothreonine. The interval 691-1533 (SYEIYEPPAP…PDTIAAWYLR (843 aa)) is b. Sulfotyrosine occurs at positions 692 and 725. The propeptide at 737–1533 (SFKNSSLNPE…PDTIAAWYLR (797 aa)) is activation peptide (connecting region). N-linked (GlcNAc...) asparagine glycosylation occurs at N841. Disordered regions lie at residues 884 to 904 (PAGKTGRHSNPKNSYSGMKSE), 947 to 1045 (DVDK…FPDR), and 1059 to 1144 (ETAL…YDLS). A 1 X 17 AA tandem repeats region spans residues 892-908 (SNPKNSYSGMKSEEDIP). A 1-1 repeat occupies 892-911 (SNPKNSYSGMKSEEDIPSEL). Phosphoserine is present on S903. Polar residues predominate over residues 951 to 975 (LTNSPQNQNITVPRGESTSHTNTTR). N-linked (GlcNAc...) asparagine glycans are attached at residues N959 and N972. Residues 1010–1021 (RTRKKKKNKKLA) are compositionally biased toward basic residues. 2 stretches are compositionally biased toward polar residues: residues 1059 to 1099 (ETAL…SLDL) and 1120 to 1134 (THSTTDPSYRSSPPE). Repeat copies occupy residues 1175–1183 (IPSSDLSLF), 1184–1192 (TISPELDQT), 1193–1201 (IIYPDLDQL), 1202–1210 (LLSPEDNQK), 1211–1219 (TSSPDLGQV), 1220–1228 (PLSPDDNQK), 1229–1237 (TSSPDLGQV), 1238–1246 (SLSPDDNQK), 1247–1255 (TSSPDLGQV), 1256–1264 (PLSLDDNQK), 1265–1273 (TTSPDLGQV), 1274–1282 (PLSPDDNQM), 1283–1291 (ITSPDLGQV), 1292–1299 (PLSSDNQK), 1300–1308 (TSSPDLGQV), 1309–1316 (PLFPEDNQ), 1317–1325 (NYFLDLSQV), 1326–1334 (PLSSDQNQE), 1335–1341 (TSSTDLL), 1342–1350 (TLSPDFGQT), 1351–1359 (VLSPDLDQL), 1360–1368 (PLPSDNSQV), 1369–1377 (TVSPDLSLL), 1378–1386 (TLSPDFNEI), 1387–1395 (ILAPDLGQV), 1396–1404 (TLSPDLIQT), 1405–1413 (NPALNHGHK), 1414–1422 (ASSADPDQA), 1423–1431 (SYPPDSGQA), 1432–1440 (SSLPELNRT), 1441–1449 (LPHPDLTHI), and 1452–1461 (PSPSPTLNNT). The tract at residues 1175–1461 (IPSSDLSLFT…PSPSPTLNNT (287 aa)) is 32 X 9 AA approximate tandem repeats of [TNP]-L-S-P-D-L-S-Q-T. Residues 1204–1312 (SPEDNQKTSS…PDLGQVPLFP (109 aa)) are disordered. Polar residues predominate over residues 1228 to 1251 (KTSSPDLGQVSLSPDDNQKTSSPD). A compositionally biased stretch (polar residues) spans 1292 to 1304 (PLSSDNQKTSSPD). The interval 1403-1462 (QTNPALNHGHKASSADPDQASYPPDSGQASSLPELNRTLPHPDLTHIPPPSPSPTLNNTS) is disordered. Residue N1438 is glycosylated (N-linked (GlcNAc...) asparagine). Plastocyanin-like domains are found at residues 1538 to 1711 (HKKF…LLIC) and 1721 to 1866 (NLPM…DKEC). The 329-residue stretch at 1538-1866 (HKKFYYIAAE…TPFLIIDKEC (329 aa)) folds into the F5/8 type A 3 domain. Residues H1802 and H1804 each coordinate Cu cation. N1811 carries an N-linked (GlcNAc...) asparagine glycan. F5/8 type C domains lie at 1866-2020 (CKMP…LQGC) and 2025-2180 (CSTP…LFGC). 2 disulfide bridges follow: C1866-C2020 and C2025-C2180.

The protein belongs to the multicopper oxidase family. As to quaternary structure, factor Va, the activated form of factor V, is composed of a heavy chain and a light chain, non-covalently bound. The interaction between the two chains is calcium-dependent. Forms heterodimer with SERPINA5. Post-translationally, thrombin activates factor V proteolytically to the active cofactor, factor Va (formation of a heavy chain at the N-terminus and a light chain at the C-terminus). Sulfation is required for efficient thrombin cleavage and activation and for full procoagulant activity. In terms of processing, activated protein C inactivates factor V and factor Va by proteolytic degradation.

Its subcellular location is the secreted. Inhibited by SERPINA5. Its function is as follows. Central regulator of hemostasis. It serves as a critical cofactor for the prothrombinase activity of factor Xa that results in the activation of prothrombin to thrombin. This Mus musculus (Mouse) protein is Coagulation factor V (F5).